The primary structure comprises 280 residues: Shikimate dehydrogenase (NADP(+)) (280 aa).

Residues 20 to 22 (SRS) and Thr-67 contribute to the shikimate site. Catalysis depends on Lys-71, which acts as the Proton acceptor. An NADP(+)-binding site is contributed by Asp-82. Residues Asn-91 and Asp-106 each contribute to the shikimate site. Residues 131 to 135 (GAGGS) and Leu-220 each bind NADP(+). Tyr-222 serves as a coordination point for shikimate. Residue Gly-243 participates in NADP(+) binding.

The protein belongs to the shikimate dehydrogenase family. As to quaternary structure, homodimer.

The enzyme catalyses shikimate + NADP(+) = 3-dehydroshikimate + NADPH + H(+). The protein operates within metabolic intermediate biosynthesis; chorismate biosynthesis; chorismate from D-erythrose 4-phosphate and phosphoenolpyruvate: step 4/7. In terms of biological role, involved in the biosynthesis of the chorismate, which leads to the biosynthesis of aromatic amino acids. Catalyzes the reversible NADPH linked reduction of 3-dehydroshikimate (DHSA) to yield shikimate (SA). This is Shikimate dehydrogenase (NADP(+)) from Rhodopseudomonas palustris (strain HaA2).